We begin with the raw amino-acid sequence, 963 residues long: Ras-interacting protein 1 (963 aa).

A compositionally biased stretch (basic and acidic residues) spans 1–10 (MLSGERKEGG). Disordered regions lie at residues 1–22 (MLSG…LPVG) and 35–118 (LGRR…AQRW). Over residues 41-57 (SAASVKSSSSDTGSRSS) the composition is skewed to low complexity. Position 94 is an omega-N-methylarginine (Arg94). Residues 96–113 (SGTGTTGSSGAGGPGTPG) show a composition bias toward gly residues. One can recognise a Ras-associating domain in the interval 144-259 (PPGVLKIFGA…RRFELRGREE (116 aa)). A phosphoserine mark is found at Ser188, Ser280, and Ser292. The interval 267–356 (AFGAADSEGT…LSMAPGAADA (90 aa)) is disordered. The span at 290 to 301 (AASGGAALASPG) shows a compositional bias: low complexity. Residues 302 to 313 (PGTGSGAPAGSG) are compositionally biased toward gly residues. Low complexity predominate over residues 320 to 333 (NLSLRRSVSELSLQ). A phosphoserine mark is found at Ser326, Ser328, Ser331, and Ser419. The Dilute domain maps to 600–897 (GRLARLIKEA…PPAEREAVDT (298 aa)).

In terms of assembly, interacts with Ras family members that have been activated by GTP binding. Interacts with HRAS, RAP1A, RAP2, RRAS, RAF1 and RRAS2. Interacts with MYH9 and ARHGAP29. In terms of tissue distribution, highly expressed in heart. Detected at lower levels in placenta and pancreas.

Its subcellular location is the cytoplasm. The protein localises to the perinuclear region. It localises to the golgi apparatus. The protein resides in the golgi stack. In terms of biological role, required for the proper formation of vascular structures that develop via both vasculogenesis and angiogenesis. Acts as a critical and vascular-specific regulator of GTPase signaling, cell architecture, and adhesion, which is essential for endothelial cell morphogenesis and blood vessel tubulogenesis. Regulates the activity of Rho GTPases in part by recruiting ARHGAP29 and suppressing RhoA signaling and dampening ROCK and MYH9 activities in endothelial cells. May act as effector for Golgi-bound HRAS and other Ras-like proteins. May promote HRAS-mediated transformation. Negative regulator of amino acid starvation-induced autophagy. The chain is Ras-interacting protein 1 (RASIP1) from Homo sapiens (Human).